The primary structure comprises 139 residues: D-ribose pyranase (139 aa).

Histidine 20 serves as the catalytic Proton donor. Substrate is bound by residues aspartate 28, histidine 106, and tyrosine 128–asparagine 130.

This sequence belongs to the RbsD / FucU family. RbsD subfamily. In terms of assembly, homodecamer.

It localises to the cytoplasm. The enzyme catalyses beta-D-ribopyranose = beta-D-ribofuranose. The protein operates within carbohydrate metabolism; D-ribose degradation; D-ribose 5-phosphate from beta-D-ribopyranose: step 1/2. Catalyzes the interconversion of beta-pyran and beta-furan forms of D-ribose. The chain is D-ribose pyranase from Histophilus somni (strain 2336) (Haemophilus somnus).